The chain runs to 254 residues: Alcohol dehydrogenase (254 aa).

Methionine 1 is modified (N-acetylmethionine). Residue phenylalanine 10 to phenylalanine 33 participates in NAD(+) binding. Substrate is bound at residue serine 138. The Proton acceptor role is filled by tyrosine 151.

This sequence belongs to the short-chain dehydrogenases/reductases (SDR) family. As to quaternary structure, homodimer.

The enzyme catalyses a primary alcohol + NAD(+) = an aldehyde + NADH + H(+). It carries out the reaction a secondary alcohol + NAD(+) = a ketone + NADH + H(+). The polypeptide is Alcohol dehydrogenase (Adh) (Drosophila lebanonensis (Fruit fly)).